We begin with the raw amino-acid sequence, 162 residues long: Transcription elongation factor GreB (162 aa).

The stretch at 52-73 (KKLLREIDRRVRYLRKRLEDVK) forms a coiled coil.

The protein belongs to the GreA/GreB family. GreB subfamily.

Its function is as follows. Necessary for efficient RNA polymerase transcription elongation past template-encoded arresting sites. The arresting sites in DNA have the property of trapping a certain fraction of elongating RNA polymerases that pass through, resulting in locked ternary complexes. Cleavage of the nascent transcript by cleavage factors such as GreA or GreB allows the resumption of elongation from the new 3'terminus. GreB releases sequences of up to 9 nucleotides in length. The polypeptide is Transcription elongation factor GreB (Pseudomonas putida (strain ATCC 47054 / DSM 6125 / CFBP 8728 / NCIMB 11950 / KT2440)).